Consider the following 88-residue polypeptide: Protein transport protein Sec61 subunit beta (88 aa).

The disordered stretch occupies residues 1 to 41 (MDSSVPGGQRTLQKRRNAQLQKEKKANQTPASPRQAGFGGS). At 1 to 60 (MDSSVPGGQRTLQKRRNAQLQKEKKANQTPASPRQAGFGGSSSSILKLYTDEANGLRVDP) the chain is on the cytoplasmic side. The chain crosses the membrane as a helical span at residues 61–81 (LVVLFLAVAFVFSVVALHVVA).

This sequence belongs to the SEC61-beta family. Heterotrimeric complex composed of SEC61, SEB1 and SSS1.

It localises to the endoplasmic reticulum membrane. Necessary for protein translocation in the endoplasmic reticulum. This Kluyveromyces lactis (strain ATCC 8585 / CBS 2359 / DSM 70799 / NBRC 1267 / NRRL Y-1140 / WM37) (Yeast) protein is Protein transport protein Sec61 subunit beta (SBH1).